The sequence spans 89 residues: MASCSRAQVISLYRMLMKESKKFPSYNYRTYALRRVKDGFRENLHVDNPRTLDLLINQARENLAVIKRQVSIGHLYSAQRTVVEKEPHL.

This sequence belongs to the complex I LYR family.

It is found in the mitochondrion. Its subcellular location is the nucleus. It functions in the pathway cofactor biosynthesis; iron-sulfur cluster biosynthesis. Required for nuclear and mitochondrial iron-sulfur protein biosynthesis. The sequence is that of LYR motif-containing protein 4 (lyrm4) from Danio rerio (Zebrafish).